A 216-amino-acid chain; its full sequence is GTP cyclohydrolase 1 (216 aa).

Positions 108, 111, and 179 each coordinate Zn(2+).

This sequence belongs to the GTP cyclohydrolase I family. In terms of assembly, homomer.

It carries out the reaction GTP + H2O = 7,8-dihydroneopterin 3'-triphosphate + formate + H(+). The protein operates within cofactor biosynthesis; 7,8-dihydroneopterin triphosphate biosynthesis; 7,8-dihydroneopterin triphosphate from GTP: step 1/1. In Shewanella baltica (strain OS223), this protein is GTP cyclohydrolase 1.